Reading from the N-terminus, the 566-residue chain is Mediator of RNA polymerase II transcription subunit 1 (566 aa).

A Phosphoserine modification is found at Ser155. Positions Thr361 to Thr425 are disordered. A compositionally biased stretch (basic residues) spans Arg410–Arg421. Phosphoserine is present on Ser423.

The protein belongs to the Mediator complex subunit 1 family. In terms of assembly, component of the Mediator complex, which is composed of at least 21 subunits that form three structurally distinct submodules. The Mediator head module contains MED6, MED8, MED11, SRB4/MED17, SRB5/MED18, ROX3/MED19, SRB2/MED20 and SRB6/MED22, the middle module contains MED1, MED4, NUT1/MED5, MED7, CSE2/MED9, NUT2/MED10, SRB7/MED21 and SOH1/MED31, and the tail module contains MED2, PGD1/MED3, RGR1/MED14, GAL11/MED15 and SIN4/MED16. The head and the middle modules interact directly with RNA polymerase II, whereas the elongated tail module interacts with gene-specific regulatory proteins. MED1 interacts directly with MED4 and MED7.

The protein localises to the nucleus. Its function is as follows. Component of the Mediator complex, a coactivator involved in the regulated transcription of nearly all RNA polymerase II-dependent genes. Mediator functions as a bridge to convey information from gene-specific regulatory proteins to the basal RNA polymerase II transcription machinery. The Mediator complex, having a compact conformation in its free form, is recruited to promoters by direct interactions with regulatory proteins and serves for the assembly of a functional preinitiation complex with RNA polymerase II and the general transcription factors. The Mediator complex unfolds to an extended conformation and partially surrounds RNA polymerase II, specifically interacting with the unphosphorylated form of the C-terminal domain (CTD) of RNA polymerase II. The Mediator complex dissociates from the RNA polymerase II holoenzyme and stays at the promoter when transcriptional elongation begins. The chain is Mediator of RNA polymerase II transcription subunit 1 (MED1) from Saccharomyces cerevisiae (strain ATCC 204508 / S288c) (Baker's yeast).